A 229-amino-acid polypeptide reads, in one-letter code: Tubulin-specific chaperone B (229 aa).

The region spanning 170–212 (GATKFKEGVWVGVKYDEPVGKNDGSVAGVRYFDCDPKYGGFVR) is the CAP-Gly domain.

This sequence belongs to the TBCB family. Supercomplex made of cofactors A to E. Cofactors A and D function by capturing and stabilizing tubulin in a quasi-native conformation. Cofactor E binds to the cofactor D-tubulin complex; interaction with cofactor C then causes the release of tubulin polypeptides that are committed to the native state.

It is found in the cytoplasm. It localises to the cytoskeleton. Its function is as follows. Binds to alpha-tubulin folding intermediates after their interaction with cytosolic chaperonin in the pathway leading from newly synthesized tubulin to properly folded heterodimer. This chain is Tubulin-specific chaperone B, found in Caenorhabditis elegans.